A 581-amino-acid chain; its full sequence is Sulfate adenylyltransferase (581 aa).

The N-terminal stretch occupies residues 1–176 (MANAPHGGVL…VQAIQAPTHF (176 aa)). The catalytic stretch occupies residues 177–401 (DYVPLRYTPA…LRESYPPRPQ (225 aa)). Sulfate is bound at residue Gln-204. ATP is bound by residues 204 to 207 (QTRN) and 298 to 301 (GRDH). Active-site residues include Thr-205, Arg-206, and Asn-207. Arg-206 contributes to the sulfate binding site. Residue Ala-302 coordinates sulfate. Met-340 contacts ATP. Residues 402–581 (QGFTILLTGL…IMILESQNLV (180 aa)) form an allosteric regulation domain; adenylyl-sulfate kinase-like region. Residues 441 to 444 (EELR), 486 to 487 (TA), and Arg-526 each bind 3'-phosphoadenylyl sulfate.

It in the N-terminal section; belongs to the sulfate adenylyltransferase family. The protein in the C-terminal section; belongs to the APS kinase family. As to quaternary structure, homohexamer. Dimer of trimers.

Its subcellular location is the cytoplasm. The catalysed reaction is sulfate + ATP + H(+) = adenosine 5'-phosphosulfate + diphosphate. Its pathway is sulfur metabolism; hydrogen sulfide biosynthesis; sulfite from sulfate: step 1/3. With respect to regulation, allosterically inhibited by 3'-phosphoadenosine 5'-phosphosulfate (PAPS). Catalyzes the first intracellular reaction of sulfate assimilation, forming adenosine-5'-phosphosulfate (APS) from inorganic sulfate and ATP. Plays an important role in sulfate activation as a component of the biosynthesis pathway of sulfur-containing amino acids. This Cryptococcus neoformans var. grubii serotype A (strain H99 / ATCC 208821 / CBS 10515 / FGSC 9487) (Filobasidiella neoformans var. grubii) protein is Sulfate adenylyltransferase.